Consider the following 94-residue polypeptide: ESAT-6-like protein EsxO (94 aa).

It belongs to the WXG100 family. ESAT-6 subfamily. As to quaternary structure, forms a complex with EsxP.

It is found in the secreted. The protein is ESAT-6-like protein EsxO of Mycobacterium tuberculosis (strain CDC 1551 / Oshkosh).